The sequence spans 488 residues: Glutamyl-tRNA(Gln) amidotransferase subunit A (488 aa).

Residues lysine 77 and serine 152 each act as charge relay system in the active site. The Acyl-ester intermediate role is filled by serine 176.

Belongs to the amidase family. GatA subfamily. Heterotrimer of A, B and C subunits.

It catalyses the reaction L-glutamyl-tRNA(Gln) + L-glutamine + ATP + H2O = L-glutaminyl-tRNA(Gln) + L-glutamate + ADP + phosphate + H(+). Allows the formation of correctly charged Gln-tRNA(Gln) through the transamidation of misacylated Glu-tRNA(Gln) in organisms which lack glutaminyl-tRNA synthetase. The reaction takes place in the presence of glutamine and ATP through an activated gamma-phospho-Glu-tRNA(Gln). The sequence is that of Glutamyl-tRNA(Gln) amidotransferase subunit A from Streptococcus equi subsp. zooepidemicus (strain MGCS10565).